The sequence spans 555 residues: Potassium-transporting ATPase potassium-binding subunit (555 aa).

10 helical membrane passes run 2-22 (IWVA…PTGI), 60-80 (QYAL…YFIF), 130-150 (IGIT…VMAF), 173-193 (VFLP…VPQT), 246-266 (MSNI…PFTY), 278-298 (ILFV…TTSE), 374-394 (AGFV…GLMV), 412-432 (LIAV…ALAL), 483-503 (LVMF…AASL), and 525-545 (GIFI…MLVL).

The protein belongs to the KdpA family. In terms of assembly, the system is composed of three essential subunits: KdpA, KdpB and KdpC.

Its subcellular location is the cell membrane. Its function is as follows. Part of the high-affinity ATP-driven potassium transport (or Kdp) system, which catalyzes the hydrolysis of ATP coupled with the electrogenic transport of potassium into the cytoplasm. This subunit binds the extracellular potassium ions and delivers the ions to the membrane domain of KdpB through an intramembrane tunnel. The chain is Potassium-transporting ATPase potassium-binding subunit from Bacillus cereus (strain 03BB102).